Reading from the N-terminus, the 884-residue chain is Protein translocase subunit SecA (884 aa).

ATP-binding positions include Gln-82, 100–104 (GEGKT), and Asp-491.

This sequence belongs to the SecA family.

It is found in the plastid. Its subcellular location is the chloroplast stroma. The protein resides in the chloroplast thylakoid membrane. It carries out the reaction ATP + H2O + cellular proteinSide 1 = ADP + phosphate + cellular proteinSide 2.. Its function is as follows. Has a central role in coupling the hydrolysis of ATP to the transfer of proteins across the thylakoid membrane. This Olisthodiscus luteus (Marine phytoflagellate) protein is Protein translocase subunit SecA.